We begin with the raw amino-acid sequence, 142 residues long: Hemoglobin subunit alpha-1 (142 aa).

Serine 1 is subject to N-acetylserine. The Globin domain occupies 1–142; the sequence is SLSDKDKAAV…VALALAERYR (142 aa). Histidine 59 lines the O2 pocket. Heme b is bound at residue histidine 88.

Belongs to the globin family. Hb1 is a heterotetramer of two alpha-1 chains and two beta chains. HbC is a heterotetramer of two alpha-1 chains and two beta-C chains. Red blood cells.

Its function is as follows. Involved in oxygen transport from gills to the various peripheral tissues. This is Hemoglobin subunit alpha-1 (hba1) from Trematomus newnesi (Dusky notothen).